A 123-amino-acid polypeptide reads, in one-letter code: Small ribosomal subunit protein uS12 (123 aa).

At Asp-89 the chain carries 3-methylthioaspartic acid.

The protein belongs to the universal ribosomal protein uS12 family. Part of the 30S ribosomal subunit. Contacts proteins S8 and S17. May interact with IF1 in the 30S initiation complex.

Its function is as follows. With S4 and S5 plays an important role in translational accuracy. In terms of biological role, interacts with and stabilizes bases of the 16S rRNA that are involved in tRNA selection in the A site and with the mRNA backbone. Located at the interface of the 30S and 50S subunits, it traverses the body of the 30S subunit contacting proteins on the other side and probably holding the rRNA structure together. The combined cluster of proteins S8, S12 and S17 appears to hold together the shoulder and platform of the 30S subunit. This chain is Small ribosomal subunit protein uS12, found in Afipia carboxidovorans (strain ATCC 49405 / DSM 1227 / KCTC 32145 / OM5) (Oligotropha carboxidovorans).